The primary structure comprises 315 residues: MNGRDLALALVSPGDAPRGHRDLACASLKALEEHLIDAVSEHSADGLIGAAVCGAGPEIDGAIALTAGDFTLTQAWLRAVLKTPRVSLLNDFAACALGAPRLAPSAMRLIHEGKPGRNAQIAVIGPNLGLGVAALTPHRTDGWTPVVSEGGHIDFTPGEPREVPVFEALQARHGRVSAEHFLSQQGLADIYAALGGGLDDSDEVILARVRDGDETAREALSIFSALLGAFAGDAALSFAARGGVYINSPLMERIDGLLDQAAFSRRFEDKGRMSAYLKDIPVYLAVGRCTLLGLSALFTASDLRYEAAEVKVLDC.

It belongs to the bacterial glucokinase family.

In Caulobacter vibrioides (strain ATCC 19089 / CIP 103742 / CB 15) (Caulobacter crescentus), this protein is Glucokinase-like protein CC_3167.